The following is a 721-amino-acid chain: Peptide-N(4)-(N-acetyl-beta-glucosaminyl)asparagine amidase (721 aa).

Cys-193, Cys-196, Cys-225, and Cys-228 together coordinate Zn(2+). Cys-251 (nucleophile) is an active-site residue. Residues His-278 and Asp-295 contribute to the active site.

It belongs to the transglutaminase-like superfamily. PNGase family. The cofactor is Zn(2+).

Its subcellular location is the cytoplasm. The catalysed reaction is Hydrolysis of an N(4)-(acetyl-beta-D-glucosaminyl)asparagine residue in which the glucosamine residue may be further glycosylated, to yield a (substituted) N-acetyl-beta-D-glucosaminylamine and a peptide containing an aspartate residue.. Functionally, specifically deglycosylates the denatured form of N-linked glycoproteins in the cytoplasm and assists their proteasome-mediated degradation. Cleaves the beta-aspartyl-glucosamine (GlcNAc) of the glycan and the amide side chain of Asn, converting Asn to Asp. Prefers proteins containing high-mannose over those bearing complex type oligosaccharides. Can recognize misfolded proteins in the endoplasmic reticulum that are exported to the cytosol to be destroyed and deglycosylate them, while it has no activity toward native proteins. Deglycosylation is a prerequisite for subsequent proteasome-mediated degradation of some, but not all, misfolded glycoproteins. In Arabidopsis thaliana (Mouse-ear cress), this protein is Peptide-N(4)-(N-acetyl-beta-glucosaminyl)asparagine amidase (PNG1).